A 57-amino-acid polypeptide reads, in one-letter code: UPF0337 protein SAV_1088 (57 aa).

Basic and acidic residues-rich tracts occupy residues methionine 1 to lysine 15 and glutamine 36 to histidine 57. A disordered region spans residues methionine 1–histidine 57.

It belongs to the UPF0337 (CsbD) family.

The polypeptide is UPF0337 protein SAV_1088 (Streptomyces avermitilis (strain ATCC 31267 / DSM 46492 / JCM 5070 / NBRC 14893 / NCIMB 12804 / NRRL 8165 / MA-4680)).